The sequence spans 899 residues: Protein translocase subunit SecA (899 aa).

ATP contacts are provided by residues Gln87, 105–109 (GEGKT), and Asp516. Zn(2+) is bound by residues Cys884, Cys886, Cys895, and His896.

The protein belongs to the SecA family. In terms of assembly, monomer and homodimer. Part of the essential Sec protein translocation apparatus which comprises SecA, SecYEG and auxiliary proteins SecDF. Other proteins may also be involved. The cofactor is Zn(2+).

Its subcellular location is the cell inner membrane. The protein resides in the cytoplasm. The catalysed reaction is ATP + H2O + cellular proteinSide 1 = ADP + phosphate + cellular proteinSide 2.. Functionally, part of the Sec protein translocase complex. Interacts with the SecYEG preprotein conducting channel. Has a central role in coupling the hydrolysis of ATP to the transfer of proteins into and across the cell membrane, serving as an ATP-driven molecular motor driving the stepwise translocation of polypeptide chains across the membrane. The sequence is that of Protein translocase subunit SecA from Borrelia garinii subsp. bavariensis (strain ATCC BAA-2496 / DSM 23469 / PBi) (Borreliella bavariensis).